Consider the following 87-residue polypeptide: DNA-directed RNA polymerase subunit omega (87 aa).

The protein belongs to the RNA polymerase subunit omega family. In terms of assembly, the RNAP catalytic core consists of 2 alpha, 1 beta, 1 beta' and 1 omega subunit. When a sigma factor is associated with the core the holoenzyme is formed, which can initiate transcription.

It catalyses the reaction RNA(n) + a ribonucleoside 5'-triphosphate = RNA(n+1) + diphosphate. Promotes RNA polymerase assembly. Latches the N- and C-terminal regions of the beta' subunit thereby facilitating its interaction with the beta and alpha subunits. In Pseudomonas fluorescens (strain Pf0-1), this protein is DNA-directed RNA polymerase subunit omega.